We begin with the raw amino-acid sequence, 223 residues long: ATP-dependent Clp protease proteolytic subunit 2 (223 aa).

Residues 1–40 (MHAGSGNDMDITRMTPTRLDDEPDAPEPETREDDNKTLNS) form a disordered region. Residues 21 to 32 (DEPDAPEPETRE) show a composition bias toward acidic residues. Ser-124 (nucleophile) is an active-site residue. Residue His-149 is part of the active site.

The protein belongs to the peptidase S14 family. As to quaternary structure, fourteen ClpP subunits assemble into 2 heptameric rings which stack back to back to give a disk-like structure with a central cavity, resembling the structure of eukaryotic proteasomes.

It is found in the cytoplasm. The catalysed reaction is Hydrolysis of proteins to small peptides in the presence of ATP and magnesium. alpha-casein is the usual test substrate. In the absence of ATP, only oligopeptides shorter than five residues are hydrolyzed (such as succinyl-Leu-Tyr-|-NHMec, and Leu-Tyr-Leu-|-Tyr-Trp, in which cleavage of the -Tyr-|-Leu- and -Tyr-|-Trp bonds also occurs).. Its function is as follows. Cleaves peptides in various proteins in a process that requires ATP hydrolysis. Has a chymotrypsin-like activity. Plays a major role in the degradation of misfolded proteins. This is ATP-dependent Clp protease proteolytic subunit 2 from Gluconobacter oxydans (strain 621H) (Gluconobacter suboxydans).